Reading from the N-terminus, the 248-residue chain is Amphiregulin (248 aa).

Positions 1–26 (MRTPLLPLARSVLLLLVLGSGHYAAA) are cleaved as a signal peptide. A propeptide spanning residues 27–99 (LELNDPSSGK…IIDDSVRVEQ (73 aa)) is cleaved from the precursor. Disordered stretches follow at residues 29–48 (LNDP…SAGG), 57–77 (VSTI…YDYS), and 100–136 (VIKP…KKKK). Over residues 58-70 (STISEMPSGSELS) the composition is skewed to polar residues. Basic and acidic residues predominate over residues 100–116 (VIKPKKNKTEGEKSTEK). N-linked (GlcNAc...) asparagine glycosylation is present at Asn106. The span at 117–136 (PKRKKKGGKNGKGRRNKKKK) shows a compositional bias: basic residues. The 41-residue stretch at 135-175 (KKNPCTAKFQNFCIHGECRYIENLEVVTCNCHQDYFGERCG) folds into the EGF-like domain. 3 disulfide bridges follow: Cys139/Cys152, Cys147/Cys163, and Cys165/Cys174. The chain crosses the membrane as a helical span at residues 192–215 (IAVVAVTIFVSAIILAAIGIGIVI). N-linked (GlcNAc...) asparagine glycosylation occurs at Asn241.

The protein belongs to the amphiregulin family. The immature precursor interacts with CNIH.

The protein resides in the membrane. Functionally, ligand of the EGF receptor/EGFR. Autocrine growth factor as well as a mitogen for a broad range of target cells including astrocytes, Schwann cells and fibroblasts. This Mus musculus (Mouse) protein is Amphiregulin (Areg).